Consider the following 303-residue polypeptide: MATH domain and coiled-coil domain-containing protein At3g58250 (303 aa).

The MATH domain occupies 8–135 (KKKFSWVIKN…KGELKIVVEI (128 aa)). The stretch at 231–287 (KLDWLKKKLDQVTQKKEKEAAGETRMHEIGEELKDLKLKCSDLEAQLDKEKADVLAA) forms a coiled coil.

This chain is MATH domain and coiled-coil domain-containing protein At3g58250, found in Arabidopsis thaliana (Mouse-ear cress).